The following is a 1558-amino-acid chain: ABC transporter NFT1 (1558 aa).

Residues 1–29 (MIKNGTCPFWERDDLSECARREYIEFKFP) are Extracellular-facing. Residue Asn4 is glycosylated (N-linked (GlcNAc...) asparagine). A helical membrane pass occupies residues 30-50 (LFILLTGMIYAFCKVFRAFYL). Topologically, residues 51–103 (RRKNHTNEAPEFEEQGNGNHEYARFSVLRLKSAWESRSFCNVNNRSTFDKFKK) are cytoplasmic. The chain crosses the membrane as a helical span at residues 104 to 124 (FIEGAFIVLQLTIHLYILSNM). The Extracellular portion of the chain corresponds to 125–130 (PMDNKK). The chain crosses the membrane as a helical span at residues 131-151 (FFHQGFLVQMFLWILLLVVIT). At 152-169 (LRLISASQSFRWVLACKR) the chain is on the cytoplasmic side. Residues 170–190 (DLWAVSFYSYASLFTLSILPL) traverse the membrane as a helical segment. Topologically, residues 191-201 (RSVFIGKIKDK) are extracellular. The chain crosses the membrane as a helical span at residues 202-222 (IMVKYIISETFIDLALLLLLS). Topologically, residues 223–302 (TSSIEGTRYS…SSKKGRLLPN (80 aa)) are cytoplasmic. Residues 303–323 (IICYFKAVFISQLFLAFVSSF) traverse the membrane as a helical segment. The ABC transmembrane type-1 1 domain maps to 311 to 621 (FISQLFLAFV…IASTVSLLIQ (311 aa)). Residues 324–351 (LNFVPSLLMPRILSYVNDPKSQSWNLVS) are Extracellular-facing. Residues 352–374 (LYVSSMLVSKIIATTCRGQGLFL) traverse the membrane as a helical segment. Over 375–449 (GEKGTMQLRT…VMSIDAFKVS (75 aa)) the chain is Cytoplasmic. Positions 410–434 (NASTSFEENPDSSEAEPRKKSSRKD) are disordered. Residues 424–434 (AEPRKKSSRKD) are compositionally biased toward basic and acidic residues. A helical transmembrane segment spans residues 450-470 (EAMNTFYLACEAVFMTVTALM). Over 471–481 (ILYSLLGWSAF) the chain is Extracellular. The helical transmembrane segment at 482–504 (AGTFALLAMIPLNFWCATFYGNY) threads the bilayer. The Cytoplasmic portion of the chain corresponds to 505–558 (QADQLILTDKRTSGISEALNSIRVIKLLAWENLFYQKIINVRDGEIRLLKKKAT). The chain crosses the membrane as a helical span at residues 559-579 (IFFLNHLIWFFGPTLVSAITF). The Extracellular portion of the chain corresponds to 580-584 (SVFIK). A helical transmembrane segment spans residues 585-605 (FQNQTLTPTIAFTALSLFAIL). Over 606-953 (RTPMDQIAST…KFSAYKWLAD (348 aa)) the chain is Cytoplasmic. Positions 651–892 (FGFEDASMEW…NEFLRESINN (242 aa)) constitute an ABC transporter 1 domain. ATP is bound at residue 686–693 (GPTGSGKS). Positions 892-901 (NDSKNTTHNQ) are enriched in polar residues. The interval 892–926 (NDSKNTTHNQIDLKRSTTSKKTKNGDPEGENSQDE) is disordered. The helical transmembrane segment at 954–974 (YFGGLGVVFVFTSSAILIHGI) threads the bilayer. Residues 961–1251 (VFVFTSSAIL…IIKVFSSVEL (291 aa)) enclose the ABC transmembrane type-1 2 domain. The Extracellular portion of the chain corresponds to 975–1013 (TLSQGFWLRYWLETGSSGSKSTWLYRIVEGHSNIYFILT). The chain crosses the membrane as a helical span at residues 1014–1034 (YIVIGFVSSFLTSGKVWIAII). Residues 1035 to 1082 (SGTNVTKKIFAKLLSSILYAKLRFHNVTPTGRIMNRFSKDMDIIDQQL) are Cytoplasmic-facing. Residues 1083–1105 (IPNFEGLSYSVVVCLWIILLIGY) form a helical membrane-spanning segment. At 1106-1109 (VTPQ) the chain is on the extracellular side. The helical transmembrane segment at 1110-1132 (FLLFAIPLCALYYTVCTLYLRAS) threads the bilayer. Over 1133–1199 (RELKRIDNIN…ATEWITYRVD (67 aa)) the chain is Cytoplasmic. Residues 1200 to 1220 (IIGTLVLFSSSVMIIMKASYL) form a helical membrane-spanning segment. Residues 1221–1222 (DA) are Extracellular-facing. A helical membrane pass occupies residues 1223–1243 (GLAGILLSNAFSFTETAQWII). The Cytoplasmic segment spans residues 1244-1558 (KVFSSVELLM…LAKVSFDNKR (315 aa)). The region spanning 1285–1538 (VELKNLSLRY…RNTIFYRLCR (254 aa)) is the ABC transporter 2 domain. An ATP-binding site is contributed by 1319–1326 (GRTGAGKS).

This sequence belongs to the ABC transporter superfamily. ABCC family. Conjugate transporter (TC 3.A.1.208) subfamily.

The protein localises to the membrane. This chain is ABC transporter NFT1 (NFT1), found in Saccharomyces cerevisiae (strain YJM789) (Baker's yeast).